Consider the following 152-residue polypeptide: MATLEQRLTDLLEAPVVALGFELWGIEFIRAGKHSTLRVYIDGEHGVSVENCAEVSHQVGAIMDVEDPITEEYYLEVSSPGLDRPLFKVAQFEKYVGQEAAVTLRMATNNRRKFKGVIKAVQGDMITLTVDGKDEVLAFTNIQKANIVPNFG.

The protein belongs to the RimP family.

It localises to the cytoplasm. Required for maturation of 30S ribosomal subunits. The protein is Ribosome maturation factor RimP of Aeromonas hydrophila subsp. hydrophila (strain ATCC 7966 / DSM 30187 / BCRC 13018 / CCUG 14551 / JCM 1027 / KCTC 2358 / NCIMB 9240 / NCTC 8049).